The sequence spans 569 residues: Glutamate--tRNA ligase (569 aa).

A 'HIGH' region motif is present at residues 107 to 117 (PEPNGYPHIGH).

It belongs to the class-I aminoacyl-tRNA synthetase family. Glutamate--tRNA ligase type 2 subfamily.

Its subcellular location is the cytoplasm. The enzyme catalyses tRNA(Glu) + L-glutamate + ATP = L-glutamyl-tRNA(Glu) + AMP + diphosphate. Its function is as follows. Catalyzes the attachment of glutamate to tRNA(Glu) in a two-step reaction: glutamate is first activated by ATP to form Glu-AMP and then transferred to the acceptor end of tRNA(Glu). The sequence is that of Glutamate--tRNA ligase from Nitrosopumilus maritimus (strain SCM1).